Consider the following 102-residue polypeptide: RNA-binding protein Hfq (102 aa).

In terms of domain architecture, Sm spans D9–V68. The tract at residues S65 to E102 is disordered. The span at A93–E102 shows a compositional bias: polar residues.

The protein belongs to the Hfq family. As to quaternary structure, homohexamer.

Functionally, RNA chaperone that binds small regulatory RNA (sRNAs) and mRNAs to facilitate mRNA translational regulation in response to envelope stress, environmental stress and changes in metabolite concentrations. Also binds with high specificity to tRNAs. This Photorhabdus laumondii subsp. laumondii (strain DSM 15139 / CIP 105565 / TT01) (Photorhabdus luminescens subsp. laumondii) protein is RNA-binding protein Hfq.